A 347-amino-acid polypeptide reads, in one-letter code: 4-hydroxy-2-oxovalerate aldolase 2 (347 aa).

The 251-residue stretch at 9–259 (ITIVDTTLRD…DTGVDLFPLI (251 aa)) folds into the Pyruvate carboxyltransferase domain. Substrate-binding positions include 17 to 18 (RD), Ser-171, and His-198. Residue Asp-18 participates in Mn(2+) binding. Mn(2+)-binding residues include His-198 and His-200. A substrate-binding site is contributed by Tyr-289.

The protein belongs to the 4-hydroxy-2-oxovalerate aldolase family.

It catalyses the reaction (S)-4-hydroxy-2-oxopentanoate = acetaldehyde + pyruvate. The sequence is that of 4-hydroxy-2-oxovalerate aldolase 2 from Rhodococcus opacus (strain B4).